Consider the following 59-residue polypeptide: Small ribosomal subunit protein eS30 (59 aa).

Residues 1–35 form a disordered region; sequence KVHGSLARAGKVRGQTPKVAKQEKKKKKTGRAKRR. Residues 23 to 35 show a composition bias toward basic residues; the sequence is EKKKKKTGRAKRR. Position 51 is an N6-succinyllysine (Lys51).

This sequence belongs to the eukaryotic ribosomal protein eS30 family.

This is Small ribosomal subunit protein eS30 (Fau) from Mus spicilegus (Steppe mouse).